The sequence spans 367 residues: Beta sliding clamp (367 aa).

Belongs to the beta sliding clamp family. In terms of assembly, forms a ring-shaped head-to-tail homodimer around DNA which binds and tethers DNA polymerases and other proteins to the DNA. The DNA replisome complex has a single clamp-loading complex (3 tau and 1 each of delta, delta', psi and chi subunits) which binds 3 Pol III cores (1 core on the leading strand and 2 on the lagging strand) each with a beta sliding clamp dimer. Additional proteins in the replisome are other copies of gamma, psi and chi, Ssb, DNA helicase and RNA primase.

The protein resides in the cytoplasm. Its function is as follows. Confers DNA tethering and processivity to DNA polymerases and other proteins. Acts as a clamp, forming a ring around DNA (a reaction catalyzed by the clamp-loading complex) which diffuses in an ATP-independent manner freely and bidirectionally along dsDNA. Initially characterized for its ability to contact the catalytic subunit of DNA polymerase III (Pol III), a complex, multichain enzyme responsible for most of the replicative synthesis in bacteria; Pol III exhibits 3'-5' exonuclease proofreading activity. The beta chain is required for initiation of replication as well as for processivity of DNA replication. This is Beta sliding clamp (dnaN) from Pseudomonas aeruginosa (strain ATCC 15692 / DSM 22644 / CIP 104116 / JCM 14847 / LMG 12228 / 1C / PRS 101 / PAO1).